Reading from the N-terminus, the 612-residue chain is UvrABC system protein C (612 aa).

Residues Thr20 to Ile98 form the GIY-YIG domain. Residues Ser208–Leu243 form the UVR domain.

It belongs to the UvrC family. Interacts with UvrB in an incision complex.

The protein localises to the cytoplasm. The UvrABC repair system catalyzes the recognition and processing of DNA lesions. UvrC both incises the 5' and 3' sides of the lesion. The N-terminal half is responsible for the 3' incision and the C-terminal half is responsible for the 5' incision. The polypeptide is UvrABC system protein C (Francisella tularensis subsp. novicida (strain U112)).